Reading from the N-terminus, the 20-residue chain is Thrombin-like enzyme Cdc SII (20 aa).

Belongs to the peptidase S1 family. Snake venom subfamily. In terms of assembly, monomer. As to expression, expressed by the venom gland.

It localises to the secreted. Strongly inhibited by PMSF and moderately inhibited by leupeptin. Not inhibited by EDTA, aprotinin, pepstatin, and bestatin. Functionally, thrombin-like snake venom serine protease that coagulates human plasma and bovine fibrinogen by hydrolysis of the alpha chains (FGA) (minimum coagulation dose is 60 ug on fibrinogen). Has fibrinogenolytic activities, and degrades preferentially the Aalpha chain (FGA). Shows amidolytic activity toward N-benzoyl-L-Arg-p-nitroanilide, has a higher activity than Cdc SI. In vivo, intravenous injection induces defibrin(ogen)ation and a loss of the righting reflex and opisthotoxins, together with a typical gyroxin-like effect (18-20 minutes). Subcutaneous injection into the footpads induces moderate edema. Potentiates local hemorrhagic activity induced by metalloproteinases (BaP1). The protein is Thrombin-like enzyme Cdc SII of Crotalus durissus cumanensis (South American rattlesnake).